The chain runs to 215 residues: HTH-type transcriptional repressor FabR (215 aa).

The HTH tetR-type domain maps to 10–70 (KTRRSLVEAA…TMVDESGLML (61 aa)). Positions 33-52 (SLREVAREAGIAPTSFYRHF) form a DNA-binding region, H-T-H motif.

In terms of assembly, homodimer.

It is found in the cytoplasm. In terms of biological role, represses the transcription of fabB, involved in unsaturated fatty acid (UFA) biosynthesis. By controlling UFA production, FabR directly influences the physical properties of the membrane bilayer. The sequence is that of HTH-type transcriptional repressor FabR from Escherichia coli O1:K1 / APEC.